A 553-amino-acid chain; its full sequence is Transcription factor MYB65 (553 aa).

Residues Met1 to Gly44 form a disordered region. HTH myb-type domains lie at Arg38–Leu90 and Arg91–Gln145. DNA-binding regions (H-T-H motif) lie at residues Trp66 to Leu90 and Trp118 to Ile141.

Mostly expressed in roots (e.g. root tips), stems, pollen, shoot apices, flowers and floral shoot tips, and, to a lower extent, in leaves and siliques.

It localises to the nucleus. Its function is as follows. Transcriptional activator of alpha-amylase expression that binds to 5'-CAACTGTC-3' motif in target gene promoter. In vegetative tissues, inhibits growth by reducing cell proliferation. Promotes the expression of aleurone-related genes (e.g. CP1, CP, GASA1, BXL1 and BXL2) in seeds. Together with MYB33 and MYB101, promotes the programmed cell death (PCD) the vacuolation of protein storage vacuoles (PSVs) in the aleurone layers during seed germination. Together with MYB33, facilitates anther and tapetum development. This Arabidopsis thaliana (Mouse-ear cress) protein is Transcription factor MYB65.